We begin with the raw amino-acid sequence, 130 residues long: Small ribosomal subunit protein uS9 (130 aa).

This sequence belongs to the universal ribosomal protein uS9 family.

This chain is Small ribosomal subunit protein uS9, found in Cupriavidus taiwanensis (strain DSM 17343 / BCRC 17206 / CCUG 44338 / CIP 107171 / LMG 19424 / R1) (Ralstonia taiwanensis (strain LMG 19424)).